The primary structure comprises 304 residues: 6-dehydroglucose reductase (304 aa).

NADP(+)-binding residues include Trp-28, Arg-29, and Asp-56. The Proton donor role is filled by Tyr-61. Residues Tyr-61, His-133, and Arg-134 each coordinate D-glucose. NADP(+)-binding residues include Ser-163, Asn-164, Gln-185, Ser-215, Leu-217, Gly-219, Gly-268, Ser-269, Gln-270, and Arg-274.

It belongs to the aldo/keto reductase family.

The enzyme catalyses D-glucose + NADP(+) = 6-dehydro-D-glucose + NADPH + H(+). Functionally, part of the alkanesulfonate monooxygenase (sulfo-ASMO) pathway, a D-sulfoquinovose degradation pathway that enables the complete utilization of all carbons within sulfoquinovose (SQ) with concomitant production of inorganic sulfite. Catalyzes the NADP-dependent reduction of 6-dehydro-D-glucose to D-glucose. Can also catalyze the reversible reaction, the formation of 6-dehydro-D-glucose from D-glucose in the presence of NADP(+). This is 6-dehydroglucose reductase from Novosphingobium aromaticivorans (strain ATCC 700278 / DSM 12444 / CCUG 56034 / CIP 105152 / NBRC 16084 / F199).